The sequence spans 290 residues: Shikimate dehydrogenase (NADP(+)) (290 aa).

Shikimate contacts are provided by residues Ser18–Ser20 and Thr66. Lys70 (proton acceptor) is an active-site residue. Glu82 provides a ligand contact to NADP(+). Asn91 and Asp106 together coordinate shikimate. Residues Gly130 to Ala134 and Met229 contribute to the NADP(+) site. Residue Tyr231 participates in shikimate binding. Gly252 is a binding site for NADP(+).

This sequence belongs to the shikimate dehydrogenase family. Homodimer.

The catalysed reaction is shikimate + NADP(+) = 3-dehydroshikimate + NADPH + H(+). It participates in metabolic intermediate biosynthesis; chorismate biosynthesis; chorismate from D-erythrose 4-phosphate and phosphoenolpyruvate: step 4/7. Involved in the biosynthesis of the chorismate, which leads to the biosynthesis of aromatic amino acids. Catalyzes the reversible NADPH linked reduction of 3-dehydroshikimate (DHSA) to yield shikimate (SA). The chain is Shikimate dehydrogenase (NADP(+)) from Chlorobium phaeovibrioides (strain DSM 265 / 1930) (Prosthecochloris vibrioformis (strain DSM 265)).